Consider the following 246-residue polypeptide: Small ribosomal subunit protein uS3 (246 aa).

A KH type-2 domain is found at 38–106 (IRQYLNARLA…DVQINIYEIR (69 aa)). The tract at residues 218–246 (VAKNQSRRPNAQGGNNRGGDRNRRRKGNR) is disordered.

It belongs to the universal ribosomal protein uS3 family. As to quaternary structure, part of the 30S ribosomal subunit. Forms a tight complex with proteins S10 and S14.

In terms of biological role, binds the lower part of the 30S subunit head. Binds mRNA in the 70S ribosome, positioning it for translation. The chain is Small ribosomal subunit protein uS3 from Porphyromonas gingivalis (strain ATCC 33277 / DSM 20709 / CIP 103683 / JCM 12257 / NCTC 11834 / 2561).